The sequence spans 65 residues: Large ribosomal subunit protein bL35 (65 aa).

The segment covering 1-16 (MPKMKTKKSAAKRFKV) has biased composition (basic residues). The disordered stretch occupies residues 1 to 25 (MPKMKTKKSAAKRFKVRGSGSIKRG).

It belongs to the bacterial ribosomal protein bL35 family.

The sequence is that of Large ribosomal subunit protein bL35 from Bordetella parapertussis (strain 12822 / ATCC BAA-587 / NCTC 13253).